The primary structure comprises 131 residues: Small ribosomal subunit protein bS16 (131 aa).

Residues 87 to 131 (PGAEGTYRVPTANTKPPRIPGGGAAKAVEAPAEAPAEAETPASES) form a disordered region. Low complexity predominate over residues 111–131 (AKAVEAPAEAPAEAETPASES).

This sequence belongs to the bacterial ribosomal protein bS16 family.

The polypeptide is Small ribosomal subunit protein bS16 (Kineococcus radiotolerans (strain ATCC BAA-149 / DSM 14245 / SRS30216)).